A 352-amino-acid chain; its full sequence is Cobalt transport protein NhlF (352 aa).

The next 8 helical transmembrane spans lie at 23–43, 46–66, 95–115, 131–151, 206–226, 230–250, 290–310, and 323–343; these read LASV…LYLG, GNPA…VLGV, VGFF…LVVA, EIGG…VAGL, PVGL…LLTL, AATG…LFAA, VIGL…LPMF, and FEFL…GALL.

The protein belongs to the NiCoT transporter (TC 2.A.52) family.

The protein localises to the cell membrane. Cobalt uptake is inhibited by uncouplers (CCCP and 3,5-di-tert-butyl-4-hydroxybenzylidenemalononitrile) and by the addition of excess nickel. Functionally, mediates energy-dependent uptake of cobalt ions into the cell. Can also transport nickel ions, but cobalt is the preferred substrate. The protein is Cobalt transport protein NhlF (nhlF) of Rhodococcus rhodochrous.